Here is a 539-residue protein sequence, read N- to C-terminus: CTP synthase (539 aa).

An amidoligase domain region spans residues 1 to 268 (MADTKYIFVT…DETVLRKVGL (268 aa)). Serine 15 is a binding site for CTP. Serine 15 provides a ligand contact to UTP. 16-21 (SLGKGI) lines the ATP pocket. Tyrosine 56 lines the L-glutamine pocket. Residue aspartate 73 coordinates ATP. The Mg(2+) site is built by aspartate 73 and glutamate 143. CTP is bound by residues 150-152 (DIE), 189-194 (KTKPTQ), and lysine 225. UTP-binding positions include 189-194 (KTKPTQ) and lysine 225. Residues 294–536 (TIALVGKYVE…IREAIKTRKK (243 aa)) enclose the Glutamine amidotransferase type-1 domain. Glycine 356 lines the L-glutamine pocket. The active-site Nucleophile; for glutamine hydrolysis is the cysteine 383. L-glutamine-binding positions include 384 to 387 (LGMQ), glutamate 407, and arginine 464. Residues histidine 509 and glutamate 511 contribute to the active site.

This sequence belongs to the CTP synthase family. In terms of assembly, homotetramer.

The enzyme catalyses UTP + L-glutamine + ATP + H2O = CTP + L-glutamate + ADP + phosphate + 2 H(+). It catalyses the reaction L-glutamine + H2O = L-glutamate + NH4(+). The catalysed reaction is UTP + NH4(+) + ATP = CTP + ADP + phosphate + 2 H(+). Its pathway is pyrimidine metabolism; CTP biosynthesis via de novo pathway; CTP from UDP: step 2/2. Allosterically activated by GTP, when glutamine is the substrate; GTP has no effect on the reaction when ammonia is the substrate. The allosteric effector GTP functions by stabilizing the protein conformation that binds the tetrahedral intermediate(s) formed during glutamine hydrolysis. Inhibited by the product CTP, via allosteric rather than competitive inhibition. In terms of biological role, catalyzes the ATP-dependent amination of UTP to CTP with either L-glutamine or ammonia as the source of nitrogen. Regulates intracellular CTP levels through interactions with the four ribonucleotide triphosphates. The polypeptide is CTP synthase (Porphyromonas gingivalis (strain ATCC BAA-308 / W83)).